The following is a 202-amino-acid chain: Recombination protein RecR (202 aa).

The C4-type zinc-finger motif lies at 61–76 (CARCNSFTEDEVCATC). In terms of domain architecture, Toprim spans 84-179 (GLLCIVETPA…KVTRLARGVP (96 aa)).

This sequence belongs to the RecR family.

Its function is as follows. May play a role in DNA repair. It seems to be involved in an RecBC-independent recombinational process of DNA repair. It may act with RecF and RecO. The polypeptide is Recombination protein RecR (Bordetella bronchiseptica (strain ATCC BAA-588 / NCTC 13252 / RB50) (Alcaligenes bronchisepticus)).